The chain runs to 81 residues: U12-hexatoxin-Mg1a (81 aa).

A signal peptide spans 1 to 24; the sequence is MKAPATIVILIMSLISVLWATADT. A propeptide spanning residues 25–50 is cleaved from the precursor; that stretch reads EDGNLLFPIEDFIRKFDEYPVQPKER. Cystine bridges form between Cys-52/Cys-66, Cys-59/Cys-71, and Cys-65/Cys-75. A Proline amide modification is found at Pro-78.

As to expression, expressed by the venom gland.

The protein resides in the secreted. In terms of biological role, blocks voltage-gated sodium channels (Nav). Intracranial injection into mice causes lacrimation, slow breathing and death. Intrathorax injection into crickets causes death. This is U12-hexatoxin-Mg1a from Macrothele gigas (Japanese funnel web spider).